The sequence spans 158 residues: FUN14 domain-containing protein 1 (158 aa).

The YXXL signature appears at 21 to 24; sequence YEVV. The next 2 membrane-spanning stretches (helical) occupy residues 51–70 and 77–98; these read YSVT…AGYL and IAAT…SGYV.

Belongs to the FUN14 family.

It is found in the mitochondrion outer membrane. Its function is as follows. Acts as an activator of hypoxia-induced mitophagy, an important mechanism for mitochondrial quality control. This chain is FUN14 domain-containing protein 1 (fundc1), found in Tetraodon nigroviridis (Spotted green pufferfish).